We begin with the raw amino-acid sequence, 564 residues long: 2-succinyl-5-enolpyruvyl-6-hydroxy-3-cyclohexene-1-carboxylate synthase (564 aa).

Belongs to the TPP enzyme family. MenD subfamily. Homodimer. It depends on Mg(2+) as a cofactor. Requires Mn(2+) as cofactor. Thiamine diphosphate is required as a cofactor.

It carries out the reaction isochorismate + 2-oxoglutarate + H(+) = 5-enolpyruvoyl-6-hydroxy-2-succinyl-cyclohex-3-ene-1-carboxylate + CO2. Its pathway is quinol/quinone metabolism; 1,4-dihydroxy-2-naphthoate biosynthesis; 1,4-dihydroxy-2-naphthoate from chorismate: step 2/7. It participates in quinol/quinone metabolism; menaquinone biosynthesis. Its function is as follows. Catalyzes the thiamine diphosphate-dependent decarboxylation of 2-oxoglutarate and the subsequent addition of the resulting succinic semialdehyde-thiamine pyrophosphate anion to isochorismate to yield 2-succinyl-5-enolpyruvyl-6-hydroxy-3-cyclohexene-1-carboxylate (SEPHCHC). In Vibrio vulnificus (strain YJ016), this protein is 2-succinyl-5-enolpyruvyl-6-hydroxy-3-cyclohexene-1-carboxylate synthase.